A 322-amino-acid chain; its full sequence is Succinate/fumarate mitochondrial transporter (322 aa).

3 Solcar repeats span residues 8–99 (SHPA…YRTL), 111–202 (GNTF…LKEF), and 212–303 (LPSW…VREH). The next 6 helical transmembrane spans lie at 11–31 (AINL…CHPL), 68–88 (FLAL…KMAI), 114–134 (FVAG…PMEV), 177–193 (GVSL…GANF), 219–235 (CIGL…NAPL), and 278–295 (GITP…VTFT).

It belongs to the mitochondrial carrier (TC 2.A.29) family.

The protein localises to the mitochondrion inner membrane. Transports cytoplasmic succinate, derived from isocitrate by the action of isocitrate lyase in the cytosol, into the mitochondrial matrix in exchange for fumarate. The chain is Succinate/fumarate mitochondrial transporter (SFC1) from Saccharomyces cerevisiae (strain ATCC 204508 / S288c) (Baker's yeast).